A 305-amino-acid polypeptide reads, in one-letter code: Acetyl-coenzyme A carboxylase carboxyl transferase subunit beta (305 aa).

Residues 25–293 (LWVQCPACQQ…LPKVESVASL (269 aa)) enclose the CoA carboxyltransferase N-terminal domain. Zn(2+) contacts are provided by C29, C32, C48, and C51. The C4-type zinc-finger motif lies at 29-51 (CPACQQMIFARDLEKNQRVCTHC).

Belongs to the AccD/PCCB family. As to quaternary structure, acetyl-CoA carboxylase is a heterohexamer composed of biotin carboxyl carrier protein (AccB), biotin carboxylase (AccC) and two subunits each of ACCase subunit alpha (AccA) and ACCase subunit beta (AccD). Requires Zn(2+) as cofactor.

The protein localises to the cytoplasm. It carries out the reaction N(6)-carboxybiotinyl-L-lysyl-[protein] + acetyl-CoA = N(6)-biotinyl-L-lysyl-[protein] + malonyl-CoA. The protein operates within lipid metabolism; malonyl-CoA biosynthesis; malonyl-CoA from acetyl-CoA: step 1/1. In terms of biological role, component of the acetyl coenzyme A carboxylase (ACC) complex. Biotin carboxylase (BC) catalyzes the carboxylation of biotin on its carrier protein (BCCP) and then the CO(2) group is transferred by the transcarboxylase to acetyl-CoA to form malonyl-CoA. This Granulibacter bethesdensis (strain ATCC BAA-1260 / CGDNIH1) protein is Acetyl-coenzyme A carboxylase carboxyl transferase subunit beta.